The sequence spans 35 residues: Leukocyte cysteine proteinase inhibitor 2 (35 aa).

The interval 1 to 35 (LAGGLTEPRPADTEIQEIANKVKPQLEEKTNKKYD) is disordered. A compositionally biased stretch (basic and acidic residues) spans 24–35 (PQLEEKTNKKYD).

The protein belongs to the cystatin family.

It localises to the cytoplasm. Potent inhibitor of cathepsins L and S, and papain. This chain is Leukocyte cysteine proteinase inhibitor 2, found in Sus scrofa (Pig).